The chain runs to 492 residues: N-succinylglutamate 5-semialdehyde dehydrogenase (492 aa).

220-225 serves as a coordination point for NAD(+); it reads GSANTG. Residues Glu-243 and Cys-277 contribute to the active site.

This sequence belongs to the aldehyde dehydrogenase family. AstD subfamily.

The catalysed reaction is N-succinyl-L-glutamate 5-semialdehyde + NAD(+) + H2O = N-succinyl-L-glutamate + NADH + 2 H(+). It functions in the pathway amino-acid degradation; L-arginine degradation via AST pathway; L-glutamate and succinate from L-arginine: step 4/5. Functionally, catalyzes the NAD-dependent reduction of succinylglutamate semialdehyde into succinylglutamate. The polypeptide is N-succinylglutamate 5-semialdehyde dehydrogenase (Escherichia coli O6:K15:H31 (strain 536 / UPEC)).